The chain runs to 250 residues: uncharacterized protein (250 aa).

Disordered regions lie at residues N85–P107 and E158–P198. Positions P167–Q176 are enriched in low complexity.

This is an uncharacterized protein from Mycoplasma pneumoniae (strain ATCC 29342 / M129 / Subtype 1) (Mycoplasmoides pneumoniae).